Here is a 269-residue protein sequence, read N- to C-terminus: Calretinin (269 aa).

6 EF-hand domains span residues 14 to 49 (LSAS…LESA), 61 to 96 (SLGD…EENF), 105 to 140 (GSSS…LLKK), 149 to 184 (KLQE…QENF), 193 to 228 (LSSE…LYEK), and 230 to 265 (KKEM…VLCS). The Ca(2+) site is built by Asp27, Asp29, Asn31, Tyr33, Glu38, Asp74, Asn76, Asp78, Lys80, Glu85, Asp118, Asp120, Ser122, Tyr124, Glu129, Asp162, Asn164, Asp166, Lys168, Glu173, Asp206, Asp208, Ser210, and Glu217.

Belongs to the calbindin family.

It is found in the synapse. Its subcellular location is the cell projection. It localises to the dendrite. Functionally, calcium-binding protein involved in calcium homeostasis and signal transduction. It plays a critical role in buffering intracellular calcium levels and modulating calcium-dependent signaling pathways. Predominantly expressed in specific neuronal populations, influences synaptic plasticity and neuronal excitability, contributing to learning and memory. During embryonic development, it facilitates neuronal differentiation and maturation. The protein is Calretinin (CALB2) of Gallus gallus (Chicken).